The following is a 311-amino-acid chain: Solute carrier family 25 member 36 (311 aa).

Solcar repeat units lie at residues 4–108 (RDTL…CKEK), 116–203 (DSTQ…IKQK), and 224–308 (SDFV…VVYL). The next 6 membrane-spanning stretches (helical) occupy residues 7–27 (LVHL…TCPL), 41–57 (LYIS…ASVN), 111–131 (GVFD…AGFT), 180–200 (MSAS…YESI), 226–246 (FVRM…IAYP), and 291–311 (QIPN…LLNG).

Belongs to the mitochondrial carrier (TC 2.A.29) family.

It localises to the mitochondrion inner membrane. The catalysed reaction is UTP(in) + CTP(out) = UTP(out) + CTP(in). It catalyses the reaction CTP(out) + UDP(in) = CTP(in) + UDP(out). The enzyme catalyses UMP(in) + CTP(out) = UMP(out) + CTP(in). It carries out the reaction dUTP(in) + CTP(out) = dUTP(out) + CTP(in). The catalysed reaction is dUMP(in) + CTP(out) = dUMP(out) + CTP(in). It catalyses the reaction CDP(in) + CTP(out) = CDP(out) + CTP(in). The enzyme catalyses CTP(out) + CMP(in) = CTP(in) + CMP(out). It carries out the reaction dCTP(in) + CTP(out) = dCTP(out) + CTP(in). The catalysed reaction is dCDP(in) + CTP(out) = dCDP(out) + CTP(in). It catalyses the reaction dCMP(in) + CTP(out) = dCMP(out) + CTP(in). The enzyme catalyses GTP(in) + CTP(out) = GTP(out) + CTP(in). It carries out the reaction CTP(out) + GDP(in) = CTP(in) + GDP(out). The catalysed reaction is GMP(in) + CTP(out) = GMP(out) + CTP(in). It catalyses the reaction dGTP(in) + CTP(out) = dGTP(out) + CTP(in). The enzyme catalyses dGMP(in) + CTP(out) = dGMP(out) + CTP(in). It carries out the reaction ITP(in) + CTP(out) = ITP(out) + CTP(in). The catalysed reaction is IDP(in) + CTP(out) = IDP(out) + CTP(in). It catalyses the reaction IMP(in) + CTP(out) = IMP(out) + CTP(in). The enzyme catalyses CTP(out) = CTP(in). Its function is as follows. Mitochondrial transporter that imports/exports pyrimidine nucleotides into and from mitochondria. Selectively transports cytosine, guanosine, inosine and uridine (deoxy)nucleoside mono-, di-, and triphosphates by antiport mechanism. Catalyzes uniport at much lower rate. May import (deoxy)nucleoside triphosphates in exchange for intramitochondrial (deoxy)nucleoside mono- and diphosphates, thus providing precursors necessary for de novo synthesis of mitochondrial DNA and RNA while exporting products of their catabolism. Participates in mitochondrial genome maintenance, regulation of mitochondrial membrane potential and mitochondrial respiration. This Mus musculus (Mouse) protein is Solute carrier family 25 member 36 (Slc25a36).